A 245-amino-acid chain; its full sequence is Biosynthetic peptidoglycan transglycosylase (245 aa).

The chain crosses the membrane as a helical span at residues 10 to 30 (FLALLFVVATLAQLWYLGQVL). Residues 224–245 (DPGTVPLPPPPEPTAPPEGNTQ) are disordered. Over residues 226–239 (GTVPLPPPPEPTAP) the composition is skewed to pro residues.

This sequence belongs to the glycosyltransferase 51 family.

It is found in the cell inner membrane. The enzyme catalyses [GlcNAc-(1-&gt;4)-Mur2Ac(oyl-L-Ala-gamma-D-Glu-L-Lys-D-Ala-D-Ala)](n)-di-trans,octa-cis-undecaprenyl diphosphate + beta-D-GlcNAc-(1-&gt;4)-Mur2Ac(oyl-L-Ala-gamma-D-Glu-L-Lys-D-Ala-D-Ala)-di-trans,octa-cis-undecaprenyl diphosphate = [GlcNAc-(1-&gt;4)-Mur2Ac(oyl-L-Ala-gamma-D-Glu-L-Lys-D-Ala-D-Ala)](n+1)-di-trans,octa-cis-undecaprenyl diphosphate + di-trans,octa-cis-undecaprenyl diphosphate + H(+). The protein operates within cell wall biogenesis; peptidoglycan biosynthesis. Functionally, peptidoglycan polymerase that catalyzes glycan chain elongation from lipid-linked precursors. In Alcanivorax borkumensis (strain ATCC 700651 / DSM 11573 / NCIMB 13689 / SK2), this protein is Biosynthetic peptidoglycan transglycosylase.